The following is a 284-amino-acid chain: Probable ADP-ribose 1''-phosphate phosphatase YML087W (284 aa).

Positions 23, 55, 80, and 90 each coordinate substrate. The 197-residue stretch at 34-230 (ESIPHAYIQN…HISKELKNVL (197 aa)) folds into the Macro domain. Active-site residues include N80 and D90. An intrachain disulfide couples C128 to C136. H145 is a catalytic residue. Residues T148 and T195 each contribute to the substrate site.

In terms of assembly, homodimer.

It carries out the reaction ADP-alpha-D-ribose 1''-phosphate + H2O = ADP-D-ribose + phosphate. Its function is as follows. Highly specific phosphatase involved in the metabolism of ADP-ribose 1''-phosphate (Appr1p) which is produced as a consequence of tRNA splicing. + phosphate. This chain is Probable ADP-ribose 1''-phosphate phosphatase YML087W, found in Saccharomyces cerevisiae (strain ATCC 204508 / S288c) (Baker's yeast).